Here is a 118-residue protein sequence, read N- to C-terminus: DNA-binding protein MmarC6_0793 (118 aa).

Residues 1-12 are compositionally biased toward basic and acidic residues; sequence MNPEEIRQRRLQ. The disordered stretch occupies residues 1-33; that stretch reads MNPEEIRQRRLQEMQAKAQEQGAQDPEAQRQMQ. Positions 24–33 are enriched in low complexity; sequence QDPEAQRQMQ.

The protein belongs to the PDCD5 family.

In Methanococcus maripaludis (strain C6 / ATCC BAA-1332), this protein is DNA-binding protein MmarC6_0793.